We begin with the raw amino-acid sequence, 484 residues long: mRNA decay activator protein ZFP36L2 (484 aa).

Phosphoserine is present on residues Ser-57 and Ser-127. The disordered stretch occupies residues 100–152 (YGQLKEPSGGSGTALVTKESKFRDRSFSENGERSQHLLHLQQQQKGGSGSQIN). The segment covering 117 to 134 (KESKFRDRSFSENGERSQ) has biased composition (basic and acidic residues). Positions 155 to 160 (RYKTEL) match the RNA-binding motif. 2 consecutive C3H1-type zinc fingers follow at residues 155 to 183 (RYKT…HGFH) and 193 to 221 (KYKT…HNAD). Positions 172-213 (YGEKCQFAHGFHELRSLTRHPKYKTELCRTFHTIGFCPYGPR) are RNA-binding. Disordered stretches follow at residues 261–304 (SLSF…SCSS) and 395–484 (QQGL…ISDD). Residues 401–418 (PAPPPAQPPAAPAPPSPP) show a composition bias toward pro residues. Low complexity predominate over residues 449 to 468 (YLSGSLSSGSLSGSESPSLD). 2 positions are modified to phosphoserine; by RPS6KA1: Ser-480 and Ser-482.

Associates with the cytoplasmic CCR4-NOT deadenylase to trigger ARE-containing mRNA deadenylation and decay processes. Interacts with CNOT7; this interaction is inhibited in response to phorbol 12-myristate 13-acetate (PMA) treatment in a p38 MAPK-dependent manner. Interacts with CNOT6L. Phosphorylated by RPS6KA1 at Ser-480 and Ser-482 upon phorbol 12-myristate 13-acetate (PMA) treatment; this phosphorylation results in dissociation of the CCR4-NOT-deadenylase complex and induces p38 MAPK-mediated stabilization of the low-density lipoprotein (LDL) receptor (LDLR) mRNA. Phosphorylation occurs during early preadipocyte differentiation. As to expression, expressed in preadipocytes and adipocytes (at protein level). Expressed at highest level in lymphoid tissues such as thymus, spleen, lung, uterus, ovary, small and large intestine, mammary gland, fat and bone marrow. Expressed at intermediate level in kidney, heart, adrenal, eye and fetal liver. Weakly expressed in brain, skeletal muscle and liver. Expressed through B lymphocyte development. Expressed in superior cervical ganglion (SCG) and dorsal root ganglion (DRG). Expressed in embryonic stem cells (ESCs). Expressed in oocytes.

It is found in the nucleus. Its subcellular location is the cytoplasm. In terms of biological role, zinc-finger RNA-binding protein that destabilizes several cytoplasmic AU-rich element (ARE)-containing mRNA transcripts by promoting their poly(A) tail removal or deadenylation, and hence provide a mechanism for attenuating protein synthesis. Acts as a 3'-untranslated region (UTR) ARE mRNA-binding adapter protein to communicate signaling events to the mRNA decay machinery. Functions by recruiting the CCR4-NOT deadenylase complex and probably other components of the cytoplasmic RNA decay machinery to the bound ARE-containing mRNAs, and hence promotes ARE-mediated mRNA deadenylation and decay processes. Binds to 3'-UTR ARE of numerous mRNAs. Promotes ARE-containing mRNA decay of the low-density lipoprotein (LDL) receptor (LDLR) mRNA in response to phorbol 12-myristate 13-acetate (PMA) treatment in a p38 MAPK-dependent manner. Positively regulates early adipogenesis by promoting ARE-mediated mRNA decay of immediate early genes (IEGs). Plays a role in mature peripheral neuron integrity by promoting ARE-containing mRNA decay of the transcriptional repressor REST mRNA. Plays a role in ovulation and oocyte meiotic maturation by promoting ARE-mediated mRNA decay of the luteinizing hormone receptor LHCGR mRNA. Acts as a negative regulator of erythroid cell differentiation: promotes glucocorticoid-induced self-renewal of erythroid cells by binding mRNAs that are induced or highly expressed during terminal erythroid differentiation and promotes their degradation, preventing erythroid cell differentiation. In association with ZFP36L1 maintains quiescence on developing B lymphocytes by promoting ARE-mediated decay of several mRNAs encoding cell cycle regulators that help B cells progress through the cell cycle, and hence ensuring accurate variable-diversity-joining (VDJ) recombination process and functional immune cell formation. Together with ZFP36L1 is also necessary for thymocyte development and prevention of T-cell acute lymphoblastic leukemia (T-ALL) transformation by promoting ARE-mediated mRNA decay of the oncogenic transcription factor NOTCH1 mRNA. This is mRNA decay activator protein ZFP36L2 from Mus musculus (Mouse).